The following is a 59-amino-acid chain: MLDIKLLDIIACPLCKGKLSYKKNSNELICKFDHLAYPVIDGIPALLKVKARTISSDEE.

Belongs to the UPF0434 family.

The polypeptide is UPF0434 protein Ping_0902 (Psychromonas ingrahamii (strain DSM 17664 / CCUG 51855 / 37)).